The primary structure comprises 475 residues: Ribulose bisphosphate carboxylase large chain (475 aa).

Residues 1–2 (MS) constitute a propeptide that is removed on maturation. The residue at position 3 (P3) is an N-acetylproline. K14 carries the post-translational modification N6,N6,N6-trimethyllysine. Positions 123 and 173 each coordinate substrate. K175 serves as the catalytic Proton acceptor. K177 is a substrate binding site. Mg(2+) is bound by residues K201, D203, and E204. K201 is subject to N6-carboxylysine. Residue H294 is the Proton acceptor of the active site. Substrate-binding residues include R295, H327, and S379.

Belongs to the RuBisCO large chain family. Type I subfamily. Heterohexadecamer of 8 large chains and 8 small chains; disulfide-linked. The disulfide link is formed within the large subunit homodimers. Mg(2+) is required as a cofactor. The disulfide bond which can form in the large chain dimeric partners within the hexadecamer appears to be associated with oxidative stress and protein turnover.

The protein localises to the plastid. It localises to the chloroplast. It catalyses the reaction 2 (2R)-3-phosphoglycerate + 2 H(+) = D-ribulose 1,5-bisphosphate + CO2 + H2O. It carries out the reaction D-ribulose 1,5-bisphosphate + O2 = 2-phosphoglycolate + (2R)-3-phosphoglycerate + 2 H(+). Functionally, ruBisCO catalyzes two reactions: the carboxylation of D-ribulose 1,5-bisphosphate, the primary event in carbon dioxide fixation, as well as the oxidative fragmentation of the pentose substrate in the photorespiration process. Both reactions occur simultaneously and in competition at the same active site. The chain is Ribulose bisphosphate carboxylase large chain from Populus trichocarpa (Western balsam poplar).